A 557-amino-acid chain; its full sequence is Kelch repeat and BTB domain-containing protein 2 (557 aa).

The 70-residue stretch at 26–95 (CDVIITIRDG…LYNRHISSMN (70 aa)) folds into the BTB domain. The BACK domain maps to 143–223 (IVKYIKRMLM…CIDIQNLDKK (81 aa)). Kelch repeat units lie at residues 305–352 (EIII…VIDD), 353–399 (TIYA…VLDQ), and 415–464 (SVHA…SHED).

Interacts (via BTB domain) with host CUL3.

It is found in the host cytoplasm. In terms of biological role, probable substrate-specific adapter of CUL3-containing E3 ubiquitin-protein ligases which mediate the ubiquitination and subsequent proteasomal degradation of host target proteins. The protein is Kelch repeat and BTB domain-containing protein 2 (KBTB2) of Cowpox virus (strain Brighton Red) (CPV).